Here is a 545-residue protein sequence, read N- to C-terminus: Membrane protein insertase YidC (545 aa).

The next 4 membrane-spanning stretches (helical) occupy residues 350–370 (IIGNWGWAIIVLTIIVKAVLY), 424–444 (LPMLLQIPVFIGLYWALFASV), 461–481 (ADPYYILPIIMAATMFAQTYL), and 498–518 (PLVFSVMFFFFPAGLVLYWVI).

Belongs to the OXA1/ALB3/YidC family. Type 1 subfamily. Interacts with the Sec translocase complex via SecD. Specifically interacts with transmembrane segments of nascent integral membrane proteins during membrane integration.

Its subcellular location is the cell inner membrane. In terms of biological role, required for the insertion and/or proper folding and/or complex formation of integral membrane proteins into the membrane. Involved in integration of membrane proteins that insert both dependently and independently of the Sec translocase complex, as well as at least some lipoproteins. Aids folding of multispanning membrane proteins. The sequence is that of Membrane protein insertase YidC from Neisseria meningitidis serogroup A / serotype 4A (strain DSM 15465 / Z2491).